A 443-amino-acid chain; its full sequence is Nitrate/nitrite binding protein NrtA (443 aa).

The N-terminal stretch at 1 to 25 is a signal peptide; the sequence is MSQFSRRKFLLTAGGTAAAALWLNA. A lipid anchor (N-palmitoyl cysteine) is attached at C26. C26 carries the S-diacylglycerol cysteine lipid modification. A compositionally biased stretch (low complexity) spans 31 to 46; the sequence is SSTDTTGSTSTPAPSG. Residues 31–52 form a disordered region; it reads SSTDTTGSTSTPAPSGTSGGDA. 5 residues coordinate nitrate: W96, Q150, H195, G239, and K268.

Belongs to the CmpA/NrtA family. The complex is composed of two ATP-binding proteins (NrtC and NrtD), two transmembrane proteins (NrtB) and a solute-binding protein (NrtA). NrtA can form homotrimers. Post-translationally, the N-terminus is blocked.

The protein localises to the cell inner membrane. Part of the ABC transporter complex NrtABCD involved in nitrate uptake. The complex is probably also involved in nitrite transport. NrtA is the substrate-binding protein. Binds both nitrate and nitrite with high affinity. This Synechococcus elongatus (strain ATCC 33912 / PCC 7942 / FACHB-805) (Anacystis nidulans R2) protein is Nitrate/nitrite binding protein NrtA.